A 184-amino-acid polypeptide reads, in one-letter code: Casparian strip membrane protein 1 (184 aa).

Residues 1-24 (MKESGEHGETSKAPLNRGVSKGLS) are Cytoplasmic-facing. The helical transmembrane segment at 25-45 (VLDLILRFIAIIGTLASAIAM) threads the bilayer. Residues 46–72 (GTTNETLPFFTQFIRFKAQYSDLPTLT) are Extracellular-facing. An N-linked (GlcNAc...) asparagine glycan is attached at asparagine 49. A helical transmembrane segment spans residues 73-93 (FFVVANSIVCAYLILSLPLSI). Residues 94–105 (VHIIRSRAKFSR) are Cytoplasmic-facing. A helical transmembrane segment spans residues 106–126 (LLLIFLDAVMLALVTAGASAA). The Extracellular portion of the chain corresponds to 127-159 (AAIVYLAHKGNVRANWLAICQQFDSFCERISGS). A helical membrane pass occupies residues 160-180 (LIGSFGAMVVLILLILLSAIA). Topologically, residues 181 to 184 (LARR) are cytoplasmic.

It belongs to the Casparian strip membrane proteins (CASP) family. Homodimer and heterodimers.

It is found in the cell membrane. Regulates membrane-cell wall junctions and localized cell wall deposition. Required for establishment of the Casparian strip membrane domain (CSD) and the subsequent formation of Casparian strips, a cell wall modification of the root endodermis that determines an apoplastic barrier between the intraorganismal apoplasm and the extraorganismal apoplasm and prevents lateral diffusion. This is Casparian strip membrane protein 1 from Panicum virgatum (Blackwell switchgrass).